The following is a 352-amino-acid chain: S-adenosylmethionine:tRNA ribosyltransferase-isomerase (352 aa).

This sequence belongs to the QueA family. As to quaternary structure, monomer.

The protein localises to the cytoplasm. It catalyses the reaction 7-aminomethyl-7-carbaguanosine(34) in tRNA + S-adenosyl-L-methionine = epoxyqueuosine(34) in tRNA + adenine + L-methionine + 2 H(+). Its pathway is tRNA modification; tRNA-queuosine biosynthesis. Transfers and isomerizes the ribose moiety from AdoMet to the 7-aminomethyl group of 7-deazaguanine (preQ1-tRNA) to give epoxyqueuosine (oQ-tRNA). In Vibrio cholerae serotype O1 (strain ATCC 39315 / El Tor Inaba N16961), this protein is S-adenosylmethionine:tRNA ribosyltransferase-isomerase.